Reading from the N-terminus, the 587-residue chain is Phosphomethylpyrimidine synthase (587 aa).

The tract at residues 1 to 58 (MTPTQNEIHPKHSYSPIRKDGLEVPETEIRLDDSPSGPNEPFRIYRTRGPETNPKQGL) is disordered. Positions 17 to 33 (IRKDGLEVPETEIRLDD) are enriched in basic and acidic residues. Substrate is bound by residues N180, M209, Y238, H274, 294–296 (SRG), 335–338 (DGLR), and E374. H378 is a Zn(2+) binding site. Position 401 (Y401) interacts with substrate. A Zn(2+)-binding site is contributed by H442. [4Fe-4S] cluster is bound by residues C522, C525, and C530.

This sequence belongs to the ThiC family. It depends on [4Fe-4S] cluster as a cofactor.

The catalysed reaction is 5-amino-1-(5-phospho-beta-D-ribosyl)imidazole + S-adenosyl-L-methionine = 4-amino-2-methyl-5-(phosphooxymethyl)pyrimidine + CO + 5'-deoxyadenosine + formate + L-methionine + 3 H(+). Its pathway is cofactor biosynthesis; thiamine diphosphate biosynthesis. In terms of biological role, catalyzes the synthesis of the hydroxymethylpyrimidine phosphate (HMP-P) moiety of thiamine from aminoimidazole ribotide (AIR) in a radical S-adenosyl-L-methionine (SAM)-dependent reaction. In Corynebacterium glutamicum (strain ATCC 13032 / DSM 20300 / JCM 1318 / BCRC 11384 / CCUG 27702 / LMG 3730 / NBRC 12168 / NCIMB 10025 / NRRL B-2784 / 534), this protein is Phosphomethylpyrimidine synthase.